A 265-amino-acid chain; its full sequence is Diphthine synthase (265 aa).

S-adenosyl-L-methionine-binding positions include Leu9, Asp85, Ile88, 113 to 114, Leu168, Ala211, and His236; that span reads TA.

The protein belongs to the diphthine synthase family. In terms of assembly, homodimer.

It catalyses the reaction 2-[(3S)-amino-3-carboxypropyl]-L-histidyl-[translation elongation factor 2] + 3 S-adenosyl-L-methionine = diphthine-[translation elongation factor 2] + 3 S-adenosyl-L-homocysteine + 3 H(+). The protein operates within protein modification; peptidyl-diphthamide biosynthesis. In terms of biological role, S-adenosyl-L-methionine-dependent methyltransferase that catalyzes the trimethylation of the amino group of the modified target histidine residue in translation elongation factor 2 (EF-2), to form an intermediate called diphthine. The three successive methylation reactions represent the second step of diphthamide biosynthesis. This is Diphthine synthase from Halorubrum lacusprofundi (strain ATCC 49239 / DSM 5036 / JCM 8891 / ACAM 34).